Reading from the N-terminus, the 426-residue chain is Chordin-like protein 2 (426 aa).

Positions 1 to 25 are cleaved as a signal peptide; the sequence is MVPGVRIIPSLLGLVMFWLPLDSQA. 2 VWFC domains span residues 31 to 96 and 109 to 175; these read KVCL…PRCV and KSCQ…QTCK. Asn114 carries N-linked (GlcNAc...) asparagine glycosylation. Ser182 carries the phosphoserine modification. Residues 182–191 show a composition bias toward polar residues; it reads STEENLTQLQ. The tract at residues 182–216 is disordered; it reads STEENLTQLQHGERHSQDPCSERRGPSTPAPTSLS. The N-linked (GlcNAc...) asparagine glycan is linked to Asn186. A compositionally biased stretch (basic and acidic residues) spans 192–206; sequence HGERHSQDPCSERRG. Positions 207–216 are enriched in low complexity; the sequence is PSTPAPTSLS. The region spanning 246-311 is the VWFC 3 domain; sequence KACTHNGKTY…VAGKCCKICP (66 aa).

In terms of assembly, interacts with GDF5. May interact with INHBA, BMP2, BMP4, BMP5, BMP6, and BMP7. As to expression, weakly expressed in the liver and kidney. In reproductive organs expressed in connective tissues such as ligaments of the ovary and oviduct in females, and of testis, epididymis and certain male accessory sex glands in males. Expression was high in uterine myometrium. Weakly expressed in cartilage of the femoral head, patella, articular facets of vertebrae, in the annulus fibrosus of intervertebral disks. In normal cartilage, expression was confined to articular chondrocytes especially in the superficial zone.

The protein localises to the secreted. Its function is as follows. Implicated in tumor angiogenesis. May inhibits BMPs activity by blocking their interaction with their receptors. Has a negative regulator effect on the cartilage formation/regeneration from immature mesenchymal cells, by preventing or reducing the rate of matrix accumulation. May play a role during myoblast and osteoblast differentiation, and maturation. The chain is Chordin-like protein 2 (Chrdl2) from Mus musculus (Mouse).